Consider the following 662-residue polypeptide: Hypoxia-inducible factor 3-alpha (662 aa).

The tract at residues 1 to 25 (MDWDQDRSNTELRKEKSRDAARSRR) is disordered. The region spanning 12-65 (LRKEKSRDAARSRRSQETEVLYQLAHTLPFARGVSAHLDKASIMRLTISYLRMH) is the bHLH domain. Residues 75–98 (QVEKGGEPLDACYLKALEGFVMVL) form a nuclear localization signal (isoform 2) region. PAS domains follow at residues 80 to 150 (GEPL…PNLS) and 225 to 295 (PHPA…LSKG). The nuclear export signal (isoform 2) stretch occupies residues 228–272 (ASLEPPLGRGAFLSRHSLDMKFTYCDERIAEVAGYSPDDLIGCSA). Disordered regions lie at residues 352–377 (EQTE…GNSV) and 416–446 (PILD…DLPD). Positions 414-418 (MAPIL) match the LRRLL motif. The segment covering 426–437 (TPSTPQATRRPQ) has biased composition (low complexity). Residues 448 to 581 (LTVGLENAHR…SEDKGLELLE (134 aa)) are ODD. The NTAD stretch occupies residues 450 to 501 (VGLENAHRLSTAQKNKTVETDLDIAQDPDTLDLEMLAPYISMDDDFQLNSSE). Lysine 463 is covalently cross-linked (Glycyl lysine isopeptide (Lys-Gly) (interchain with G-Cter in ubiquitin)). An LAPYISMD motif is present at residues 485–492 (LAPYISMD). A 4-hydroxyproline modification is found at proline 487. The segment at 500–595 (SEQLPKVHRR…KRSPRLEPGS (96 aa)) is disordered. Residues 505–521 (KVHRRPPRVARRPRARS) are compositionally biased toward basic residues. A Glycyl lysine isopeptide (Lys-Gly) (interchain with G-Cter in ubiquitin) cross-link involves residue lysine 565. A compositionally biased stretch (basic and acidic residues) spans 572–584 (SEDKGLELLETKP).

In terms of assembly, isoform 1 interacts with ARNT. Isoform 2 interacts with HIF1A. Isoform 2 interacts EPAS1. Isoform 2 interacts (via C-terminus domain) with BAD; the interaction reduces the binding between BAD and BAX. Isoform 2 (via C-terminus domain) interacts with BCL2L2 and MCL1. Interacts with VHL. In normoxia, hydroxylated on Pro-487 in the oxygen-dependent degradation domain (ODD) by PHD. The hydroxylated proline promotes interaction with VHL, initiating rapid ubiquitination and subsequent proteasomal degradation. In terms of processing, ubiquitinated; ubiquitination occurs in a VHL- and oxygen-dependent pathway and subsequently targeted for proteasomal degradation. As to expression, isoform 3 is expressed in endothelial cells of vessels and capillaries in alveoli of the neonatal lung (at protein level). Expressed in lung, brain, heart and kidney. Isoform 2 is expressed in heart and lung. Isoform 2 is highly expressed in the epithelial cell layer of the cornea with lower expression in the layers of ganglion cells, inner nuclear cells, and rods and cones of the retina. Isoform 2 is expressed in the cerebellum only in the Purkinje cell layer.

It is found in the nucleus. The protein resides in the cytoplasm. It localises to the nucleus speckle. Its subcellular location is the mitochondrion. Functionally, acts as a transcriptional regulator in adaptive response to low oxygen tension. Acts as a regulator of hypoxia-inducible gene expression. Plays a role in the development of the cardiorespiratory system. In terms of biological role, acts as a positive regulator of hypoxia-inducible gene expression. Associates to core DNA sequence 5'-TACGTG-3' within the hypoxia response element (HRE) of target gene promoters in a ARNT-dependent manner, and hence also participates in the transcriptional activation of reporter genes driven by HRE. Attenuates the ability of transcription factor HIF1A, EPAS1 and the HIF1A-ARNT complex to bind to hypoxia-responsive elements (HRE) located within the enhancer/promoter of hypoxia-inducible target genes and hence inhibits HRE-driven transcriptional activation. Functions as an inhibitor of angiogenesis in hypoxic cells of the cornea. May act as a tumor suppressor. May also be involved in apoptosis. Its function is as follows. Attenuates the ability of transcription factor HIF1A, EPAS1 and the HIF1A-ARNT complex to bind to hypoxia-responsive elements (HRE) located within the enhancer/promoter of hypoxia-inducible target genes and hence inhibits HRE-driven transcriptional activation. Also plays a role in the development of the lung and heart during embryonic and neonatal stages. This chain is Hypoxia-inducible factor 3-alpha, found in Mus musculus (Mouse).